The primary structure comprises 70 residues: Putative defensin-like protein 73 (70 aa).

The signal sequence occupies residues methionine 1 to alanine 29. 4 disulfides stabilise this stretch: cysteine 33-cysteine 68, cysteine 37-cysteine 57, cysteine 43-cysteine 66, and cysteine 47-cysteine 67.

Belongs to the DEFL family.

The protein resides in the secreted. The sequence is that of Putative defensin-like protein 73 (LCR44) from Arabidopsis thaliana (Mouse-ear cress).